We begin with the raw amino-acid sequence, 248 residues long: DNA repair protein RecO (248 aa).

It belongs to the RecO family.

Functionally, involved in DNA repair and RecF pathway recombination. This chain is DNA repair protein RecO, found in Streptomyces griseus subsp. griseus (strain JCM 4626 / CBS 651.72 / NBRC 13350 / KCC S-0626 / ISP 5235).